A 479-amino-acid chain; its full sequence is Ribosomal RNA small subunit methyltransferase F (479 aa).

Residues 125–131 (AAAPGSK), E149, D176, and D194 contribute to the S-adenosyl-L-methionine site. C247 acts as the Nucleophile in catalysis.

This sequence belongs to the class I-like SAM-binding methyltransferase superfamily. RsmB/NOP family.

It localises to the cytoplasm. It carries out the reaction cytidine(1407) in 16S rRNA + S-adenosyl-L-methionine = 5-methylcytidine(1407) in 16S rRNA + S-adenosyl-L-homocysteine + H(+). Its function is as follows. Specifically methylates the cytosine at position 1407 (m5C1407) of 16S rRNA. The protein is Ribosomal RNA small subunit methyltransferase F of Escherichia coli O6:H1 (strain CFT073 / ATCC 700928 / UPEC).